The sequence spans 1006 residues: MVATDSSDQVAKFDVSHKIIEDIVYSLSNRIFSYAEHVPLNRYLTQWNNSGRRNGFSNNVELFNLEARSGASAFLLGSYTAAISSPGVYSMMTPSSCLSLLNPLLSNIIPFYGASKPLVVHVAALAYLEQTYCADNVSVLDFSYANNFTVFASQSNVEAAHLALASTLAAKAAPVIHVYEPDAIVTTTDPSLPLLDSNAVVECFNSYQSEADPVSNASKALKHVNDYFNTSYAPAEYYGSQTASKVIVTFGKSETVAARALLAANPDVGVLSIRIFPFVAENIFNVLPTTCKSLVVLSQVRSTAVGTSSIYYSFLLATLLSTKPSALAISEHRYSLVESVTLSSLFDALHETLQLKAATPKAVHVDKSINVWESDVGDSLVLSLVSAYRTDKSRSVAFRPLFDNLTLAGVRFTVAQVSTANAVLTDVVKDVDADITILTTDRLPLHYRVLAKAAEHSICLLQSSIAPDEATKKLPYEFIADALEKGVKLVLIDPKKFAIDASNLPLLVSFIQLVKPGLGVDEALAVLAKQNNLTDTNLKDAVDSLKQSLSFINLDASALKDREPSEKELPSTAKETSFAPNAVKTLDEDITPQSSNWQTVAKQIIFPEAYKKKDALRPDVSEKVFTVHVRANKRLTPAEYNRNIFHIEFDLGDSGLTYDIGEALGVYGVNNKTHVHDFIEEYGLDANELIHVPSIQHPGHWETRTVFQALCQNIDIFGKPTKKFHEQLLEFETDEKERADLQILISPAGAPDFKRRAEVDMLTYADVLKEFKHAKLTAAQIAQIVPVIKRREYSISSSQKKHNDSVHLLVVVVGWKDGMGRDRYGQCSHYLSNLKVGEPLCVAVKTSVMKLPTSPLKPIVMAGLGTGLAPFRAFLQFKEWQRMQGIESGDILLYLGSRTQREEYLYGEDWEAYHSANLLTHIGQAFSRDQPYKIYIQDVMRSTKDMLKKALMDEGGSFYLCGPTWPLPEITSVLEEVIQSSYDEPVDARKIIEQWKEERRFVIEVY.

One can recognise an FAD-binding FR-type domain in the interval 622–852; that stretch reads EKVFTVHVRA…AVKTSVMKLP (231 aa). Residues 658 to 669 and 788 to 798 each bind FAD; these read YDIGEALGVYGV and IKRREYSISSS.

FAD serves as cofactor. It depends on FMN as a cofactor.

It catalyses the reaction hydrogen sulfide + 3 NADP(+) + 3 H2O = sulfite + 3 NADPH + 4 H(+). It functions in the pathway sulfur metabolism; hydrogen sulfide biosynthesis; hydrogen sulfide from sulfite (NADPH route): step 1/1. Its function is as follows. This enzyme catalyzes the 6-electron reduction of sulfite to sulfide. This is one of several activities required for the biosynthesis of L-cysteine from sulfate. This is Probable sulfite reductase [NADPH] flavoprotein component from Schizosaccharomyces pombe (strain 972 / ATCC 24843) (Fission yeast).